The sequence spans 508 residues: Pyruvate kinase, cytosolic isozyme (508 aa).

Position 48 (Arg-48) interacts with substrate. K(+) is bound by residues Asn-50, Ser-52, Asp-82, and Thr-83. 50–53 serves as a coordination point for ATP; sequence NFSH. Residues Arg-89 and Lys-174 each contribute to the ATP site. Mg(2+) is bound at residue Glu-240. The substrate site is built by Gly-263, Asp-264, and Thr-296. Asp-264 is a Mg(2+) binding site.

The protein belongs to the pyruvate kinase family. In terms of assembly, homotetramer. Requires Mg(2+) as cofactor. It depends on K(+) as a cofactor.

It is found in the cytoplasm. The enzyme catalyses pyruvate + ATP = phosphoenolpyruvate + ADP + H(+). The protein operates within carbohydrate degradation; glycolysis; pyruvate from D-glyceraldehyde 3-phosphate: step 5/5. The protein is Pyruvate kinase, cytosolic isozyme of Nicotiana tabacum (Common tobacco).